The chain runs to 176 residues: Large ribosomal subunit protein eL20 (176 aa).

Residue Lys-11 forms a Glycyl lysine isopeptide (Lys-Gly) (interchain with G-Cter in SUMO2) linkage. Phosphotyrosine is present on Tyr-63. Residue Ser-71 is modified to Phosphoserine. The residue at position 76 (Lys-76) is an N6-succinyllysine. Ser-123 is modified (phosphoserine). Residues Lys-128 and Lys-170 each participate in a glycyl lysine isopeptide (Lys-Gly) (interchain with G-Cter in SUMO2) cross-link.

Belongs to the eukaryotic ribosomal protein eL20 family. Component of the large ribosomal subunit. Binds IPO9 with high affinity.

The protein localises to the cytoplasm. Functionally, component of the large ribosomal subunit. The ribosome is a large ribonucleoprotein complex responsible for the synthesis of proteins in the cell. In Bos taurus (Bovine), this protein is Large ribosomal subunit protein eL20 (RPL18A).